Here is a 291-residue protein sequence, read N- to C-terminus: MEFSRPPLVHVKGIPLIKYFAETIGPLQNFTAWPDDLLISTYPKSGTTWMSEILDMIYQGGKLEKCGRAPIYARVPFLEFKCPGVPSGLETLEETPAPRLLKTHLPLSLLPQSLLDQKVKVIYIARNAKDVVVSYYNFYNMAKLHPDPGTWDSFLENFMDGEVSYGSWYQHVKEWWELRHTHPVLYLFYEDIKENPKREIKKILEFLGRSLPEETVDSIVHHTSFKKMKENCMTNYTTIPTEIMDHNVSPFMRKGTTGDWKNTFTVAQNERFDAHYAKTMTDCDFKFRCEL.

Residue 44 to 49 (KSGTTW) participates in 3'-phosphoadenylyl sulfate binding. 102–104 (KTH) serves as a coordination point for substrate. Histidine 104 acts as the Proton acceptor in catalysis. 3'-phosphoadenylyl sulfate-binding positions include arginine 126, serine 134, tyrosine 189, 223-228 (TSFKKM), and 251-255 (FMRKG). Serine 134 bears the Phosphoserine mark.

Belongs to the sulfotransferase 1 family. Homodimer. The N-terminus is blocked. In terms of tissue distribution, liver, kidney, heart and colon.

The protein localises to the cytoplasm. The catalysed reaction is a phenol + 3'-phosphoadenylyl sulfate = an aryl sulfate + adenosine 3',5'-bisphosphate + H(+). The enzyme catalyses 17beta-estradiol + 3'-phosphoadenylyl sulfate = 17beta-estradiol 3-sulfate + adenosine 3',5'-bisphosphate + H(+). It catalyses the reaction 4-ethylphenol + 3'-phosphoadenylyl sulfate = 4-ethylphenyl sulfate + adenosine 3',5'-bisphosphate + H(+). It carries out the reaction 4-nitrophenol + 3'-phosphoadenylyl sulfate = 4-nitrophenyl sulfate + adenosine 3',5'-bisphosphate. The catalysed reaction is dopamine + 3'-phosphoadenylyl sulfate = dopamine 3-O-sulfate + adenosine 3',5'-bisphosphate + H(+). The enzyme catalyses dopamine + 3'-phosphoadenylyl sulfate = dopamine 4-O-sulfate + adenosine 3',5'-bisphosphate + H(+). It catalyses the reaction 3,3',5-triiodo-L-thyronine + 3'-phosphoadenylyl sulfate = 3,3',5-triiodo-L-thyronine sulfate + adenosine 3',5'-bisphosphate + H(+). It carries out the reaction 3,3',5'-triiodo-L-thyronine + 3'-phosphoadenylyl sulfate = 3,3',5'-triiodo-L-thyronine sulfate + adenosine 3',5'-bisphosphate + H(+). The catalysed reaction is 3,3'-diiodo-L-thyronine + 3'-phosphoadenylyl sulfate = 3,3'-diiodo-L-thyronine sulfate + adenosine 3',5'-bisphosphate + H(+). The enzyme catalyses L-thyroxine + 3'-phosphoadenylyl sulfate = L-thyroxine sulfate + adenosine 3',5'-bisphosphate + H(+). Functionally, sulfotransferase that utilizes 3'-phospho-5'-adenylyl sulfate (PAPS) as sulfonate donor to catalyze the sulfate conjugation of a wide variety of acceptor molecules bearing a hydroxyl or an amine group. Sulfonation increases the water solubility of most compounds, and therefore their renal excretion, but it can also result in bioactivation to form active metabolites. Displays broad substrate specificity for small phenolic compounds. Plays an important roles in the sulfonation of endogenous molecules such as steroid hormones. Mediates the sulfate conjugation of a variety of xenobiotics, including the drugs acetaminophen and minoxidil. Mediates also the metabolic activation of carcinogenic N-hydroxyarylamines leading to highly reactive intermediates capable of forming DNA adducts, potentially resulting in mutagenesis. May play a role in gut microbiota-host metabolic interaction. O-sulfonates 4-ethylphenol (4-EP), a dietary tyrosine-derived metabolite produced by gut bacteria. The product 4-EPS crosses the blood-brain barrier and may negatively regulate oligodendrocyte maturation and myelination, affecting the functional connectivity of different brain regions associated with the limbic system. Catalyzes the sulfate conjugation of dopamine. Catalyzes the sulfation of T4 (L-thyroxine/3,5,3',5'-tetraiodothyronine), T3 (3,5,3'-triiodothyronine), rT3 (3,3',5'-triiodothyronine) and 3,3'-T2 (3,3'-diiodothyronine), with a substrate preference of 3,3'-T2 &gt; rT3 &gt; T3 &gt; T4. This chain is Sulfotransferase 1A1 (Sult1a1), found in Rattus norvegicus (Rat).